We begin with the raw amino-acid sequence, 158 residues long: Transcription elongation factor GreB (158 aa).

Belongs to the GreA/GreB family. GreB subfamily.

Its function is as follows. Necessary for efficient RNA polymerase transcription elongation past template-encoded arresting sites. The arresting sites in DNA have the property of trapping a certain fraction of elongating RNA polymerases that pass through, resulting in locked ternary complexes. Cleavage of the nascent transcript by cleavage factors such as GreA or GreB allows the resumption of elongation from the new 3'terminus. GreB releases sequences of up to 9 nucleotides in length. The chain is Transcription elongation factor GreB from Escherichia coli O157:H7.